The following is a 548-amino-acid chain: Membrane protein insertase YidC (548 aa).

Residues Asn-6–Asp-26 traverse the membrane as a helical segment. Residues Asn-28–Gly-56 are disordered. The segment covering Pro-29–Thr-42 has biased composition (low complexity). Helical transmembrane passes span Phe-350–Tyr-370, Phe-424–Ile-444, Leu-458–Ile-478, and Pro-499–Val-519.

This sequence belongs to the OXA1/ALB3/YidC family. Type 1 subfamily. As to quaternary structure, interacts with the Sec translocase complex via SecD. Specifically interacts with transmembrane segments of nascent integral membrane proteins during membrane integration.

It is found in the cell inner membrane. In terms of biological role, required for the insertion and/or proper folding and/or complex formation of integral membrane proteins into the membrane. Involved in integration of membrane proteins that insert both dependently and independently of the Sec translocase complex, as well as at least some lipoproteins. Aids folding of multispanning membrane proteins. This is Membrane protein insertase YidC from Salmonella heidelberg (strain SL476).